Reading from the N-terminus, the 282-residue chain is 4-diphosphocytidyl-2-C-methyl-D-erythritol kinase (282 aa).

Residue Lys12 is part of the active site. ATP is bound at residue 95–105 (PMGGGIGGGSS). The active site involves Asp137.

The protein belongs to the GHMP kinase family. IspE subfamily.

The catalysed reaction is 4-CDP-2-C-methyl-D-erythritol + ATP = 4-CDP-2-C-methyl-D-erythritol 2-phosphate + ADP + H(+). It participates in isoprenoid biosynthesis; isopentenyl diphosphate biosynthesis via DXP pathway; isopentenyl diphosphate from 1-deoxy-D-xylulose 5-phosphate: step 3/6. Functionally, catalyzes the phosphorylation of the position 2 hydroxy group of 4-diphosphocytidyl-2C-methyl-D-erythritol. This is 4-diphosphocytidyl-2-C-methyl-D-erythritol kinase from Pseudomonas aeruginosa (strain UCBPP-PA14).